Consider the following 65-residue polypeptide: DNA-directed RNA polymerase subunit omega (65 aa).

This sequence belongs to the RNA polymerase subunit omega family. In terms of assembly, the RNAP catalytic core consists of 2 alpha, 1 beta, 1 beta' and 1 omega subunit. When a sigma factor is associated with the core the holoenzyme is formed, which can initiate transcription.

The enzyme catalyses RNA(n) + a ribonucleoside 5'-triphosphate = RNA(n+1) + diphosphate. Its function is as follows. Promotes RNA polymerase assembly. Latches the N- and C-terminal regions of the beta' subunit thereby facilitating its interaction with the beta and alpha subunits. This is DNA-directed RNA polymerase subunit omega from Finegoldia magna (strain ATCC 29328 / DSM 20472 / WAL 2508) (Peptostreptococcus magnus).